A 112-amino-acid chain; its full sequence is MVSKASAMFSRIAPRKARMIADLVRGRDADEAIQLLSFTQKSGAPVLRKIIESAVANAQQAGADIDALFISKATVDKGPNKFNRRWRPRAMGRATRITKGVSHIVIEVDERK.

Belongs to the universal ribosomal protein uL22 family. As to quaternary structure, part of the 50S ribosomal subunit.

Functionally, this protein binds specifically to 23S rRNA; its binding is stimulated by other ribosomal proteins, e.g. L4, L17, and L20. It is important during the early stages of 50S assembly. It makes multiple contacts with different domains of the 23S rRNA in the assembled 50S subunit and ribosome. Its function is as follows. The globular domain of the protein is located near the polypeptide exit tunnel on the outside of the subunit, while an extended beta-hairpin is found that lines the wall of the exit tunnel in the center of the 70S ribosome. The polypeptide is Large ribosomal subunit protein uL22 (Sorangium cellulosum (strain So ce56) (Polyangium cellulosum (strain So ce56))).